A 1470-amino-acid chain; its full sequence is Isonitrile lipopeptide synthase (1470 aa).

The interval 584–603 (PEPESQEAARPTAPAPTAPA) is disordered. Residues 974 to 1049 (AHDSTLERTI…ELARFLKQQE (76 aa)) enclose the Carrier domain. Position 1009 is an O-(pantetheine 4'-phosphoryl)serine (serine 1009). Over residues 1049–1059 (EQQAHAQVQPR) the composition is skewed to low complexity. Positions 1049–1070 (EQQAHAQVQPRPAGPGLPPTLL) are disordered.

This sequence belongs to the ATP-dependent AMP-binding enzyme family. Pantetheine 4'-phosphate serves as cofactor.

It catalyses the reaction 2 a (3R)-3-isocyanyl-fatty acyl-[ACP] + L-lysine + ATP + 2 NADPH = an isonitrile lipopeptide + 2 holo-[ACP] + AMP + diphosphate + 2 NADP(+). The enzyme catalyses 2 (3R)-3-isocyanylbutanoyl-[ACP] + L-lysine + ATP + 2 NADPH = (2S)-2,6-bis[(3R)-3-isocyanobutanamido]hexan-1-ol + 2 holo-[ACP] + AMP + diphosphate + 2 NADP(+). Nonribosomal peptide synthetase (NRPS) involved in the biosynthesis of a unique class of isonitrile lipopeptides (INLPs). Catalyzes the final step in the pathway, i.e. the condensation of a (3R)-3-isocyanyl-fatty acyl-[ACP] to both amino groups of a lysine, producing isonitrile lipopeptides. Can use (3R)-3-isocyanylbutanoyl-[ACP] as substrate, leading to (2S)-2,6-bis[(3R)-3-isocyanobutanamido]hexan-1-ol. The protein is Isonitrile lipopeptide synthase of Streptomyces coeruleorubidus.